The chain runs to 370 residues: Molybdenum import ATP-binding protein ModC (370 aa).

The ABC transporter domain maps to 2–233 (SVRVDIGHRL…LDLLPAEERG (232 aa)). Position 31 to 38 (31 to 38 (GPSGSGKT)) interacts with ATP. The 67-residue stretch at 293-359 (GLSALNILPG…VKTVSFDRAN (67 aa)) folds into the Mop domain.

Belongs to the ABC transporter superfamily. Molybdate importer (TC 3.A.1.8) family. As to quaternary structure, the complex is composed of two ATP-binding proteins (ModC), two transmembrane proteins (ModB) and a solute-binding protein (ModA).

It localises to the cell inner membrane. The catalysed reaction is molybdate(out) + ATP + H2O = molybdate(in) + ADP + phosphate + H(+). In terms of biological role, part of the ABC transporter complex ModABC involved in molybdenum import. Responsible for energy coupling to the transport system. In Mesorhizobium japonicum (strain LMG 29417 / CECT 9101 / MAFF 303099) (Mesorhizobium loti (strain MAFF 303099)), this protein is Molybdenum import ATP-binding protein ModC.